Here is a 125-residue protein sequence, read N- to C-terminus: Large ribosomal subunit protein bL12 (125 aa).

This sequence belongs to the bacterial ribosomal protein bL12 family. Homodimer. Part of the ribosomal stalk of the 50S ribosomal subunit. Forms a multimeric L10(L12)X complex, where L10 forms an elongated spine to which 2 to 4 L12 dimers bind in a sequential fashion. Binds GTP-bound translation factors.

Its function is as follows. Forms part of the ribosomal stalk which helps the ribosome interact with GTP-bound translation factors. Is thus essential for accurate translation. The polypeptide is Large ribosomal subunit protein bL12 (Hyphomonas neptunium (strain ATCC 15444)).